The primary structure comprises 391 residues: Mannose-6-phosphate isomerase (391 aa).

Zn(2+)-binding residues include Q97, H99, E134, and H255. The active site involves R274.

The protein belongs to the mannose-6-phosphate isomerase type 1 family. Requires Zn(2+) as cofactor.

It localises to the cytoplasm. The enzyme catalyses D-mannose 6-phosphate = D-fructose 6-phosphate. Its function is as follows. Involved in the conversion of glucose to GDP-L-fucose, which can be converted to L-fucose, a capsular polysaccharide. The polypeptide is Mannose-6-phosphate isomerase (manA) (Salmonella typhimurium (strain LT2 / SGSC1412 / ATCC 700720)).